The chain runs to 163 residues: Globin CTT-Z (163 aa).

The signal sequence occupies residues 1 to 16 (MKFFAVLALCIVGAIA). One can recognise a Globin domain in the interval 18-162 (PLTSDEAALV…VYTAVFQIVT (145 aa)). Heme b contacts are provided by H76 and H111.

This sequence belongs to the globin family.

This Chironomus thummi thummi (Midge) protein is Globin CTT-Z (CTT-Z).